The chain runs to 477 residues: Actin-related protein 7 (477 aa).

It belongs to the actin family. As to quaternary structure, forms a heterodimer with ARP9. Interacts with NPL6. Component of the two forms of the RSC complex composed of at least either RSC1 or RSC2, and ARP7, ARP9, LDB7, NPL6, RSC3, RSC30, RSC4, RSC58, RSC6, RSC8, RSC9, SFH1, STH1, HTL1 and probably RTT102. The complexes interact with histone and histone variant components of centromeric chromatin. Component of the SWI/SNF global transcription activator complex. The 1.14 MDa SWI/SNF complex is composed of 11 different subunits: one copy each of SWI1, SNF2/SWI2, SNF5, SNF12/SWP73, ARP7/SWP61, ARP9/SWP59; two copies each of SWI3, SNF6, SNF11, SWP82; and three copies of TAF14/SWP29.

The protein resides in the nucleus. Functionally, component of the chromatin structure remodeling complex (RSC), which is involved in transcription regulation and nucleosome positioning. RSC is responsible for the transfer of a histone octamer from a nucleosome core particle to naked DNA. The reaction requires ATP and involves an activated RSC-nucleosome intermediate. Remodeling reaction also involves DNA translocation, DNA twist and conformational change. As a reconfigurer of centromeric and flanking nucleosomes, RSC complex is required both for proper kinetochore function in chromosome segregation and, via a PKC1-dependent signaling pathway, for organization of the cellular cytoskeleton. This subunit is involved in transcriptional regulation. Heterodimer of ARP7 and ARP9 functions with HMG box proteins to facilitate proper chromatin architecture. Heterodimer formation is necessary for assembly into RSC complex. Part of the SWI/SNF complex, an ATP-dependent chromatin remodeling complex, is required for the positive and negative regulation of gene expression of a large number of genes. It changes chromatin structure by altering DNA-histone contacts within a nucleosome, leading eventually to a change in nucleosome position, thus facilitating or repressing binding of gene-specific transcription factors. This is Actin-related protein 7 (ARP7) from Saccharomyces cerevisiae (strain ATCC 204508 / S288c) (Baker's yeast).